An 859-amino-acid chain; its full sequence is MPPAPKNGSAANAWRSERNARPREVWRAIVPKNLMADDTTRRLLAVAGQLQTLLFQIELLKRCDPEVLVKRALRAKIKHNALMVLYLHSRLAGDLAAQAAHRLTVGIYCLWMWLRRACSEAAALANEIDTYATYRDKDRFFSATMNLSPGGTCRLHSLVGLSLYGRTQDVTRELGLINDAENLLKQINYCHLIVSTESAEAALVGVDEFLTATVGGGMVASPETYDHTQPCCICLDELSVTANQGDTIYKRLGYSVCDHLVKQVKVNVTPDDVLRHMPFLNSVDANTLRGAIDKLRGSSGGEVGGGRRLAGVVPTGCRAEVGRSEQEDGAPAGDDRADLEHEARASRILDSYDVFTEAPGPVYRLSELRYWLASGKAAGAKTRGSCAHATHQATVLQKLDTDLSAMFARAETFERECRSAEREIFGTSFAHFHRHVASKIASVRGVGGGGEALIDKLLAGSPATAPEAEIETLISSCYSHHMSLPLFSRLGNPEKADTDALVEILKSYRDQTRPRADKAGGRAEDGAGDCDDEGYPGAADATRRGQRDWIGRVRVDTAAVADEHEDKVKKLLDRAERDLTTRRKNYAERLSARSFSNLDRCVKNQRAELEKLLRVNVYGAALPAMYVELKNGFLARQAFMKAVTSDESQHIRRCRLAREDVEGYEQHQYVRSALMRTSLDPAALPHLASRFYELVSGPMFRRHVERFPQPPNTSLYFTVENVGLLPHLKEELASFTRTYAHAEWMVSEFREFYDFSGISGVSETQRAAYAYIREAVFAAALFESIFQCGRAKLMRADSVEVDAGGPLLTDGIYLTFEERFPLIAIWGVGEDRRLCATSVVVTEKDLYAVLYAVLHKQDK.

The C3H1-type zinc finger occupies 231-259; sequence CCICLDELSVTANQGDTIYKRLGYSVCDH. Over residues 512 to 525 the composition is skewed to basic and acidic residues; it reads TRPRADKAGGRAED. A disordered region spans residues 512–542; it reads TRPRADKAGGRAEDGAGDCDDEGYPGAADAT. 782-789 contacts ATP; it reads FESIFQCG.

It belongs to the herpesviridae TRM1 protein family. Associates with TRM2 and TRM3 to form the tripartite terminase complex. Interacts with portal protein.

The protein resides in the host nucleus. Functionally, component of the molecular motor that translocates viral genomic DNA in empty capsid during DNA packaging. Forms a tripartite terminase complex together with TRM2 and TRM3 in the host cytoplasm. Once the complex reaches the host nucleus, it interacts with the capsid portal vertex. This portal forms a ring in which genomic DNA is translocated into the capsid. TRM1 carries an endonuclease activity that plays an important role for the cleavage of concatemeric viral DNA into unit length genomes. The sequence is that of Tripartite terminase subunit 1 from Amazona oratrix (yellow-headed parrot).